The primary structure comprises 268 residues: Eukaryotic translation initiation factor 3 subunit G-2 (268 aa).

The RRM domain maps to 187 to 265 (SAVRISNLSE…LILCVEWSKP (79 aa)).

The protein belongs to the eIF-3 subunit G family. Component of the eukaryotic translation initiation factor 3 (eIF-3) complex. The eIF-3 complex interacts with pix.

The protein localises to the cytoplasm. In terms of biological role, RNA-binding component of the eukaryotic translation initiation factor 3 (eIF-3) complex, which is involved in protein synthesis of a specialized repertoire of mRNAs and, together with other initiation factors, stimulates binding of mRNA and methionyl-tRNAi to the 40S ribosome. The eIF-3 complex specifically targets and initiates translation of a subset of mRNAs involved in cell proliferation. This subunit can bind 18S rRNA. This Drosophila willistoni (Fruit fly) protein is Eukaryotic translation initiation factor 3 subunit G-2.